Consider the following 232-residue polypeptide: MKKVLFYVLPFAFFGCSATVDPQISMKPPAYVEELAPKQSNNVESAPGSLFGKGDNPLFSDKKAMNVNDLVTVIIQESTTQSTQANKATSRTNTSNLDGGTLTGSSGVVASALDKVNAYSNIGFQTNSSNNYTGTGSQSRNESFNTTISTRVIKILSNGNYFIEGSRELLINGEKQIIQLSGVIRPYDIGQDNTIDSKYIADAKILYKTEGEVDRSTRKPWGSKVIEAIWPF.

A signal peptide spans 1–15 (MKKVLFYVLPFAFFG). C16 carries N-palmitoyl cysteine lipidation. A lipid anchor (S-diacylglycerol cysteine) is attached at C16.

The protein belongs to the FlgH family. The basal body constitutes a major portion of the flagellar organelle and consists of four rings (L,P,S, and M) mounted on a central rod.

The protein resides in the cell outer membrane. It localises to the bacterial flagellum basal body. In terms of biological role, assembles around the rod to form the L-ring and probably protects the motor/basal body from shearing forces during rotation. The polypeptide is Flagellar L-ring protein (Campylobacter jejuni subsp. doylei (strain ATCC BAA-1458 / RM4099 / 269.97)).